Here is a 736-residue protein sequence, read N- to C-terminus: Dimethylamine dehydrogenase (736 aa).

At Cys31 the chain carries S-6-FMN cysteine. 176 to 179 (YGAH) provides a ligand contact to substrate. The active-site Proton donor is Tyr181. Residues Arg229 and Arg329 each coordinate FMN. Cys352, Cys355, Cys358, and Cys371 together coordinate [4Fe-4S] cluster. 398 to 427 (DVLIVGAGPAGSECARVLMERGYTVHLVDT) lines the ADP pocket.

The protein in the N-terminal section; belongs to the NADH:flavin oxidoreductase/NADH oxidase family. FMN is required as a cofactor. [4Fe-4S] cluster serves as cofactor.

It carries out the reaction dimethylamine + oxidized [electron-transfer flavoprotein] + H2O + H(+) = methylamine + reduced [electron-transfer flavoprotein] + formaldehyde. This chain is Dimethylamine dehydrogenase (dmd), found in Hyphomicrobium sp. (strain x).